Reading from the N-terminus, the 147-residue chain is Large ribosomal subunit protein bL9 (147 aa).

It belongs to the bacterial ribosomal protein bL9 family.

Its function is as follows. Binds to the 23S rRNA. This Bacteroides fragilis (strain YCH46) protein is Large ribosomal subunit protein bL9.